The sequence spans 171 residues: MSVSFRDRVLKLYLLGFDPSEIAQTLSLDAKRKVTEEEVLHVLAEARELLSALPSLEDIRAEVGQALERARIFQKDLLAIYQNMLRNYNAMMEGLTEHPDGTPVIGVRPADIAAMADRIMKIDQERITALLNSLKVLGHVGSTTAGALPSATELVRVEELVAEVVDEAPKT.

Belongs to the P23virus small terminase family. As to quaternary structure, homononamer; forms a ring-like structure through which genomic DNA is translocated into the capsid. Heterodimer with the terminase large subunit; the active complex is probably heterooligomeric.

The terminase small subunit binds to the packaging initiation site and regulates the ATPase activity of the terminase large subunit. The terminase lies at a unique vertex of the procapsid and is composed of two subunits, a small terminase subunit involved in viral DNA recognition (packaging sequence), and a large terminase subunit. Both terminase subunits heterooligomerize and are docked on the portal protein to form the packaging machine. The sequence is that of Terminase, small subunit from Thermus virus P23-45 (Thermus thermophilus phage P23-45).